The primary structure comprises 510 residues: Histidine ammonia-lyase (510 aa).

Positions 143-145 (ASG) form a cross-link, 5-imidazolinone (Ala-Gly). Serine 144 bears the 2,3-didehydroalanine (Ser) mark.

Belongs to the PAL/histidase family. Post-translationally, contains an active site 4-methylidene-imidazol-5-one (MIO), which is formed autocatalytically by cyclization and dehydration of residues Ala-Ser-Gly.

It is found in the cytoplasm. It catalyses the reaction L-histidine = trans-urocanate + NH4(+). Its pathway is amino-acid degradation; L-histidine degradation into L-glutamate; N-formimidoyl-L-glutamate from L-histidine: step 1/3. This chain is Histidine ammonia-lyase, found in Shewanella piezotolerans (strain WP3 / JCM 13877).